The primary structure comprises 60 residues: Sperm protamine P1 (60 aa).

The interval 1–60 is disordered; the sequence is MARYRHSRSRSRSRYRRRRRRRSRYRSRRRRXRRRRRSRRGRRRRGYSRRRYSRRRRRRY.

It belongs to the protamine P1 family. Testis.

Its subcellular location is the nucleus. It localises to the chromosome. Functionally, protamines substitute for histones in the chromatin of sperm during the haploid phase of spermatogenesis. They compact sperm DNA into a highly condensed, stable and inactive complex. The protein is Sperm protamine P1 (PRM1) of Petrogale concinna (Nabarlek).